The following is a 502-amino-acid chain: Cytochrome P450 3A5 (502 aa).

Heme is bound at residue cysteine 441.

This sequence belongs to the cytochrome P450 family. The cofactor is heme.

The protein resides in the endoplasmic reticulum membrane. The protein localises to the microsome membrane. It catalyses the reaction an organic molecule + reduced [NADPH--hemoprotein reductase] + O2 = an alcohol + oxidized [NADPH--hemoprotein reductase] + H2O + H(+). It carries out the reaction 17beta-estradiol + reduced [NADPH--hemoprotein reductase] + O2 = 2-hydroxy-17beta-estradiol + oxidized [NADPH--hemoprotein reductase] + H2O + H(+). The enzyme catalyses 17beta-estradiol + reduced [NADPH--hemoprotein reductase] + O2 = 4-hydroxy-17beta-estradiol + oxidized [NADPH--hemoprotein reductase] + H2O + H(+). The catalysed reaction is estrone + reduced [NADPH--hemoprotein reductase] + O2 = 2-hydroxyestrone + oxidized [NADPH--hemoprotein reductase] + H2O + H(+). It catalyses the reaction estrone + reduced [NADPH--hemoprotein reductase] + O2 = 4-hydroxyestrone + oxidized [NADPH--hemoprotein reductase] + H2O + H(+). It carries out the reaction testosterone + reduced [NADPH--hemoprotein reductase] + O2 = 6beta,17beta-dihydroxyandrost-4-en-3-one + oxidized [NADPH--hemoprotein reductase] + H2O + H(+). The enzyme catalyses androst-4-ene-3,17-dione + reduced [NADPH--hemoprotein reductase] + O2 = 6beta-hydroxyandrost-4-ene-3,17-dione + oxidized [NADPH--hemoprotein reductase] + H2O + H(+). The catalysed reaction is progesterone + reduced [NADPH--hemoprotein reductase] + O2 = 6beta-hydroxyprogesterone + oxidized [NADPH--hemoprotein reductase] + H2O + H(+). It catalyses the reaction all-trans-retinol + reduced [NADPH--hemoprotein reductase] + O2 = all-trans-retinal + oxidized [NADPH--hemoprotein reductase] + 2 H2O + H(+). It carries out the reaction all-trans-retinoate + reduced [NADPH--hemoprotein reductase] + O2 = all-trans-4-hydroxyretinoate + oxidized [NADPH--hemoprotein reductase] + H2O + H(+). It functions in the pathway steroid hormone biosynthesis. Its pathway is cofactor metabolism; retinol metabolism. Functionally, a cytochrome P450 monooxygenase involved in the metabolism of steroid hormones and vitamins. Mechanistically, uses molecular oxygen inserting one oxygen atom into a substrate, and reducing the second into a water molecule, with two electrons provided by NADPH via cytochrome P450 reductase (NADPH--hemoprotein reductase). Catalyzes the hydroxylation of carbon-hydrogen bonds. Exhibits high catalytic activity for the formation of catechol estrogens from 17beta-estradiol (E2) and estrone (E1), namely 2-hydroxy E1 and E2. Catalyzes 6beta-hydroxylation of the steroid hormones testosterone, progesterone, and androstenedione. Catalyzes the oxidative conversion of all-trans-retinol to all-trans-retinal, a rate-limiting step for the biosynthesis of all-trans-retinoic acid (atRA). Further metabolizes all trans-retinoic acid (atRA) to 4-hydroxyretinoate and may play a role in hepatic atRA clearance. Also involved in the oxidative metabolism of xenobiotics, including calcium channel blocking drug nifedipine and immunosuppressive drug cyclosporine. In Homo sapiens (Human), this protein is Cytochrome P450 3A5.